The sequence spans 205 residues: Probable GTP-binding protein EngB (205 aa).

Positions 25–199 (NGIEIAFIGY…KLSLNSSYKK (175 aa)) constitute an EngB-type G domain. GTP is bound by residues 33–40 (GYSNTGKS), 60–64 (GRTQL), 78–81 (DLPG), 145–148 (TKCD), and 178–180 (FSS). 2 residues coordinate Mg(2+): Ser-40 and Thr-62.

It belongs to the TRAFAC class TrmE-Era-EngA-EngB-Septin-like GTPase superfamily. EngB GTPase family. Mg(2+) serves as cofactor.

In terms of biological role, necessary for normal cell division and for the maintenance of normal septation. The protein is Probable GTP-binding protein EngB of Buchnera aphidicola subsp. Acyrthosiphon pisum (strain 5A).